A 500-amino-acid chain; its full sequence is ADP,ATP carrier protein 5 (500 aa).

A run of 11 helical transmembrane segments spans residues 21-41 (IYNY…CILF), 62-82 (IAGF…VIIY), 94-114 (IFYY…FVIY), 149-169 (YIVY…LLFW), 184-204 (FYTL…FLMM), 224-244 (ITLV…CCLL), 287-307 (LWLL…VEAV), 328-348 (LYIL…NNVM), 357-377 (AVIS…LIVF), 381-401 (ILSL…VSIG), and 469-489 (SISP…IYAV).

It belongs to the ADP/ATP translocase tlc family.

The protein localises to the cell membrane. Its function is as follows. Provides the rickettsial cell with host ATP in exchange for rickettsial ADP. This is an obligate exchange system. This energy acquiring activity is an important component of rickettsial parasitism. The sequence is that of ADP,ATP carrier protein 5 (tlcE) from Rickettsia bellii (strain RML369-C).